We begin with the raw amino-acid sequence, 326 residues long: Protoheme IX farnesyltransferase (326 aa).

Helical transmembrane passes span 35 to 55, 60 to 80, 106 to 126, 129 to 149, 157 to 177, 185 to 205, 242 to 262, and 283 to 303; these read LIPLLLATTLGGMALTEGWPL, LVCTLGGGALASAAAGVLNCL, SAFIGAIACTLAAAMLLVSGV, LAAGLSLLGLCSYVLLYTALL, IVIGGVAGAIPPLVGAAAATG, WLFALVMVWTPAHFWALALLL, GFGVLALPTGGVFYGLILLPF, and AKGLFRWSILYLFGICLLLIL.

The protein belongs to the UbiA prenyltransferase family. Protoheme IX farnesyltransferase subfamily.

The protein resides in the cell inner membrane. The catalysed reaction is heme b + (2E,6E)-farnesyl diphosphate + H2O = Fe(II)-heme o + diphosphate. The protein operates within porphyrin-containing compound metabolism; heme O biosynthesis; heme O from protoheme: step 1/1. Converts heme B (protoheme IX) to heme O by substitution of the vinyl group on carbon 2 of heme B porphyrin ring with a hydroxyethyl farnesyl side group. The protein is Protoheme IX farnesyltransferase of Parasynechococcus marenigrum (strain WH8102).